The following is a 650-amino-acid chain: Aminopeptidase B (650 aa).

Position 2 is an N-acetylalanine (Ala2). Position 7 is a phosphoserine (Ser7). Position 298–302 (298–302) interacts with substrate; that stretch reads GGMEN. Residue His325 participates in Zn(2+) binding. The active-site Proton acceptor is Glu326. Zn(2+) is bound by residues His329 and Glu348. Residue Lys446 is modified to N6-acetyllysine.

This sequence belongs to the peptidase M1 family. The cofactor is Zn(2+).

The protein localises to the secreted. It carries out the reaction Release of N-terminal Arg and Lys from oligopeptides when P1' is not Pro. Also acts on arylamides of Arg and Lys.. Its function is as follows. Exopeptidase which selectively removes arginine and/or lysine residues from the N-terminus of several peptide substrates including Arg(0)-Leu-enkephalin, Arg(0)-Met-enkephalin and Arg(-1)-Lys(0)-somatostatin-14. Can hydrolyze leukotriene A4 (LTA-4) into leukotriene B4 (LTB-4). This is Aminopeptidase B (RNPEP) from Homo sapiens (Human).